A 237-amino-acid polypeptide reads, in one-letter code: Ubiquinone biosynthesis O-methyltransferase (237 aa).

S-adenosyl-L-methionine contacts are provided by arginine 38, glycine 58, aspartate 79, and methionine 124.

This sequence belongs to the methyltransferase superfamily. UbiG/COQ3 family.

It catalyses the reaction a 3-demethylubiquinol + S-adenosyl-L-methionine = a ubiquinol + S-adenosyl-L-homocysteine + H(+). The catalysed reaction is a 3-(all-trans-polyprenyl)benzene-1,2-diol + S-adenosyl-L-methionine = a 2-methoxy-6-(all-trans-polyprenyl)phenol + S-adenosyl-L-homocysteine + H(+). Its pathway is cofactor biosynthesis; ubiquinone biosynthesis. O-methyltransferase that catalyzes the 2 O-methylation steps in the ubiquinone biosynthetic pathway. This chain is Ubiquinone biosynthesis O-methyltransferase, found in Acinetobacter baumannii (strain AB307-0294).